We begin with the raw amino-acid sequence, 505 residues long: Maturase K (505 aa).

The protein belongs to the intron maturase 2 family. MatK subfamily.

The protein resides in the plastid. Its subcellular location is the chloroplast. Its function is as follows. Usually encoded in the trnK tRNA gene intron. Probably assists in splicing its own and other chloroplast group II introns. In Ulmus parvifolia (Chinese elm), this protein is Maturase K.